Reading from the N-terminus, the 91-residue chain is uncharacterized protein (91 aa).

The chain crosses the membrane as a helical span at residues 12-34; that stretch reads FAIVYANITFLFYYLLDFTLPFH.

It is found in the membrane. This is an uncharacterized protein from Saccharomyces cerevisiae (strain ATCC 204508 / S288c) (Baker's yeast).